Reading from the N-terminus, the 355-residue chain is tRNA uridine(34) hydroxylase (355 aa).

One can recognise a Rhodanese domain in the interval 146–240; the sequence is DDPDTLFVDM…YARKAKEQGL (95 aa). Residue C200 is the Cysteine persulfide intermediate of the active site. The segment at 333 to 355 is disordered; it reads NKSKGLLQATMHIPSPEKSADEK.

Belongs to the TrhO family.

It catalyses the reaction uridine(34) in tRNA + AH2 + O2 = 5-hydroxyuridine(34) in tRNA + A + H2O. Catalyzes oxygen-dependent 5-hydroxyuridine (ho5U) modification at position 34 in tRNAs. The protein is tRNA uridine(34) hydroxylase of Yersinia pseudotuberculosis serotype O:1b (strain IP 31758).